The following is a 1124-amino-acid chain: Putative DNA mismatch repair protein mutS homolog L359 (1124 aa).

779–786 (SNNWAGKS) serves as a coordination point for ATP.

It belongs to the DNA mismatch repair MutS family.

In terms of biological role, may be involved in DNA-mismatch repair. The polypeptide is Putative DNA mismatch repair protein mutS homolog L359 (Acanthamoeba polyphaga (Amoeba)).